A 61-amino-acid chain; its full sequence is Photosystem II reaction center protein K (61 aa).

Residues 1–24 (MLNIFNLICICFNSALFSSTFLVA) constitute a propeptide that is removed on maturation. The chain crosses the membrane as a helical span at residues 40–60 (MPVIPLFFLLLAFVWQAAVSF).

Belongs to the PsbK family. PSII is composed of 1 copy each of membrane proteins PsbA, PsbB, PsbC, PsbD, PsbE, PsbF, PsbH, PsbI, PsbJ, PsbK, PsbL, PsbM, PsbT, PsbX, PsbY, PsbZ, Psb30/Ycf12, at least 3 peripheral proteins of the oxygen-evolving complex and a large number of cofactors. It forms dimeric complexes.

It localises to the plastid. The protein resides in the chloroplast thylakoid membrane. In terms of biological role, one of the components of the core complex of photosystem II (PSII). PSII is a light-driven water:plastoquinone oxidoreductase that uses light energy to abstract electrons from H(2)O, generating O(2) and a proton gradient subsequently used for ATP formation. It consists of a core antenna complex that captures photons, and an electron transfer chain that converts photonic excitation into a charge separation. The protein is Photosystem II reaction center protein K of Sinapis alba (White mustard).